Consider the following 101-residue polypeptide: Small ribosomal subunit protein bS18c (101 aa).

The protein belongs to the bacterial ribosomal protein bS18 family. As to quaternary structure, part of the 30S ribosomal subunit.

The protein resides in the plastid. The protein localises to the chloroplast. This chain is Small ribosomal subunit protein bS18c, found in Coffea arabica (Arabian coffee).